The chain runs to 409 residues: MEEYEDFEMEDLSELVSYMDYLETQRLTISQLDYSLSIPPQLLVSREISKLEDEVCEMLKESSLFQLFRKHKGYLNVTDLVLPLWCEVQHEYYLLRRIKKKTPKMERGIKLHQILEYETSPPSERRVLDRTSKEEPWALRLLRQLEGIMLLQKNGITREFPIWGYYKESSIFGIIDEISLNNPSKSNFNSDIRNYFNFKMYDLSFVDNKTRFSSRKPGASQILSSKVQLMYYVHLFLNYFPSLGEKQQSIFRDISPTYSNRLHSQSHWWNMFLSQLSLDGTKDLGPKFLEQSILSIPDIPEDVFAGHNSLNGLYALVFASAKKLHLRLTDDNLTIAYRNDKTGEVVYKDKFSFSNKLLEASYTKAYQFWHNLREPEGVPAEEVYKCRSCEFQKECWWLKKKQYYPLSSP.

Cys-86 provides a ligand contact to [4Fe-4S] cluster. Positions 176 and 207 each coordinate Mg(2+). [4Fe-4S] cluster is bound by residues Cys-386, Cys-389, and Cys-395.

It belongs to the EXO5 family. In terms of assembly, monomer. It depends on Mg(2+) as a cofactor. [4Fe-4S] cluster serves as cofactor.

It localises to the cytoplasm. It is found in the nucleus. Its subcellular location is the mitochondrion. Functionally, single-stranded DNA (ssDNA) bidirectional exonuclease involved in DNA repair. Probably involved in DNA repair following ultraviolet (UV) irradiation and interstrand cross-links (ICLs) damage. Has both 5'-3' and 3'-5' exonuclease activities with a strong preference for 5'-ends. Acts as a sliding exonuclease that loads at ssDNA ends and then slides along the ssDNA prior to cutting; however the sliding and the 3'-5' exonuclease activities are abolished upon binding to the replication protein A (RPA) complex that enforces 5'-directionality activity. Plays a redundant role with the flap endonuclease FEN1/rad2 for the maintenance of mitochondrial DNA. The chain is Exonuclease V (exo5) from Schizosaccharomyces pombe (strain 972 / ATCC 24843) (Fission yeast).